We begin with the raw amino-acid sequence, 262 residues long: Hemin import ATP-binding protein HmuV (262 aa).

The ABC transporter domain maps to 3-244; sequence LQARNLTLAR…DHMRRVYGIE (242 aa). 35-42 serves as a coordination point for ATP; that stretch reads GANGAGKS.

It belongs to the ABC transporter superfamily. Heme (hemin) importer (TC 3.A.1.14.5) family. In terms of assembly, the complex is composed of two ATP-binding proteins (HmuV), two transmembrane proteins (HmuU) and a solute-binding protein (HmuT).

The protein resides in the cell inner membrane. Part of the ABC transporter complex HmuTUV involved in hemin import. Responsible for energy coupling to the transport system. This is Hemin import ATP-binding protein HmuV from Bordetella parapertussis (strain 12822 / ATCC BAA-587 / NCTC 13253).